Reading from the N-terminus, the 149-residue chain is UPAR/Ly6 domain-containing protein bou (149 aa).

The N-terminal stretch at 1–31 (MWPPKHAHIGWLSSLALVVLLMSLQMVMVSG) is a signal peptide. The Extracellular segment spans residues 32–126 (IECYVCDTSD…YTCDTDGCNA (95 aa)). Cystine bridges form between Cys34–Cys74, Cys37–Cys48, Cys65–Cys91, Cys100–Cys115, and Cys119–Cys124. The N-linked (GlcNAc...) asparagine glycan is linked to Asn64. Asn125 carries the GPI-anchor amidated asparagine lipid modification. Positions 126–149 (AAGRLELEWGVAAALLTLTWLLRH) are cleaved as a propeptide — removed in mature form. A helical membrane pass occupies residues 127-147 (AGRLELEWGVAAALLTLTWLL). Topologically, residues 148-149 (RH) are cytoplasmic.

Post-translationally, GPI-anchored.

It localises to the cell membrane. Its subcellular location is the cell junction. It is found in the septate junction. The protein resides in the cytoplasm. The protein localises to the cell cortex. It localises to the secreted. Its subcellular location is the apicolateral cell membrane. Its function is as follows. Involved in tracheal paracellular barrier functions mediated by epithelial cell septate junctions. Involved in paracellular barrier functions mediated by glial cell septate junctions in the peripheral nervous system, including the chordotonal organs, but not the hemolymph-brain barrier (the insect blood-brain barrier) of the central nervous system. Required for septate junction assembly, possibly by organizing the preassembly and transport of septate junction proteins such as dlg1/disks large 1, Nrx-IV/Neurexin-IV and the claudin protein kune. Involved in chitin fiber organization during tracheal development. Secreted, possibly in association with extracellular vesicles, to act non-autonomously on tissues distant from its site of expression. The chain is UPAR/Ly6 domain-containing protein bou from Drosophila melanogaster (Fruit fly).